A 161-amino-acid chain; its full sequence is Cyclic pyranopterin monophosphate synthase (161 aa).

Substrate-binding positions include 75-77 (LCH) and 113-114 (ME). The active site involves Asp-128.

This sequence belongs to the MoaC family. In terms of assembly, homohexamer; trimer of dimers.

It carries out the reaction (8S)-3',8-cyclo-7,8-dihydroguanosine 5'-triphosphate = cyclic pyranopterin phosphate + diphosphate. It functions in the pathway cofactor biosynthesis; molybdopterin biosynthesis. Functionally, catalyzes the conversion of (8S)-3',8-cyclo-7,8-dihydroguanosine 5'-triphosphate to cyclic pyranopterin monophosphate (cPMP). The chain is Cyclic pyranopterin monophosphate synthase from Enterobacter sp. (strain 638).